The chain runs to 527 residues: MIETDRETFTALADDGPAIVRVAADLDIDVAPLTAYDALVADADDHAFLLESAEKTPASDPDGAFTPDTTTEETRHARYSFVGYDPAAVVTVDPDDTTITRLRDDPITDLLDAPDHATGDVLDRLRSVMPAVPRRNIPTEDRQLLDGGLVGFLAYDAVYDLWLDEVGVERPPTPLPDAEFAVTTRTLVFDRATDSVSLVCTPVADADTATDVYDALEAEAKRVQAVLRDATAPATAGIEVTTERAGDRDAYTDAVETAATAVRDGEVYQAVVSRTRELDGDIDPRALYDALRAVNPSPYMFLLAHGDHTVVGASPETLVAVHDDTVVTNPIAGTCQRGASPVADRRLAGEMLADEKERAEHTMLVDLARNDVRRVSAPGTVSVPEFMRVLKYSHVQHIESTVTGTLAADADAFDATRAAFPAGTLSGAPKVRAMEHIDAIEATPRGIYGGGVGYFSWTGDAELAITIRSGTITHTGDEDTLTVRAGAGVVADSDPDAEYEETEAKMDGVLAAVDRLRTTDDGEAVHR.

Ser52 serves as a coordination point for L-tryptophan. The tract at residues 53-72 is disordered; that stretch reads AEKTPASDPDGAFTPDTTTE. Position 298–300 (298–300) interacts with L-tryptophan; the sequence is PYM. 333–334 contacts chorismate; it reads GT. Glu360 contributes to the Mg(2+) binding site. Chorismate contacts are provided by residues Tyr448, Arg468, 486–488, and Gly488; that span reads GAG. Glu501 contributes to the Mg(2+) binding site.

This sequence belongs to the anthranilate synthase component I family. In terms of assembly, tetramer of two components I and two components II. Mg(2+) serves as cofactor.

It catalyses the reaction chorismate + L-glutamine = anthranilate + pyruvate + L-glutamate + H(+). Its pathway is amino-acid biosynthesis; L-tryptophan biosynthesis; L-tryptophan from chorismate: step 1/5. This Halobacterium salinarum (strain ATCC 700922 / JCM 11081 / NRC-1) (Halobacterium halobium) protein is Anthranilate synthase component 1 1 (trpE1).